The following is a 243-amino-acid chain: rRNA adenine N-6-methyltransferase (243 aa).

Positions 11, 13, 38, 59, 84, and 101 each coordinate S-adenosyl-L-methionine.

It belongs to the class I-like SAM-binding methyltransferase superfamily. rRNA adenine N(6)-methyltransferase family.

It carries out the reaction adenosine(2085) in 23S rRNA + 2 S-adenosyl-L-methionine = N(6)-dimethyladenosine(2085) in 23S rRNA + 2 S-adenosyl-L-homocysteine + 2 H(+). Functionally, this protein produces a dimethylation of the adenine residue at position 2085 in 23S rRNA, resulting in reduced affinity between ribosomes and macrolide-lincosamide-streptogramin B antibiotics. This chain is rRNA adenine N-6-methyltransferase (ermA1), found in Staphylococcus aureus (strain Mu50 / ATCC 700699).